A 408-amino-acid chain; its full sequence is Transmembrane protein 237 (408 aa).

A compositionally biased stretch (basic and acidic residues) spans 1–14; it reads MRTDSGARLEEGHL. The interval 1 to 137 is disordered; sequence MRTDSGARLE…RRKTKKTQPA (137 aa). S25 and S49 each carry phosphoserine. Residues 60-77 show a composition bias toward basic and acidic residues; sequence RPSEGNEPSTKELKEHPE. Residues 95–106 show a composition bias toward low complexity; it reads TSSTQKKSSSSS. The next 4 helical transmembrane spans lie at 227-247, 268-288, 303-323, and 358-378; these read MIGLFSHGFLAGCAVWNIVVI, LAYPFQSLLYLLLALSTISAF, FLALDPTALASFLYFTALILS, and WIVVNLVVALLVGLSWLFLSY.

The protein belongs to the TMEM237 family. Part of the tectonic-like complex (also named B9 complex). Interacts with TMEM107.

It localises to the membrane. Its subcellular location is the cell projection. The protein localises to the cilium. Its function is as follows. Component of the transition zone in primary cilia. Required for ciliogenesis. This is Transmembrane protein 237 (TMEM237) from Homo sapiens (Human).